A 213-amino-acid chain; its full sequence is Probable transaldolase (213 aa).

The Schiff-base intermediate with substrate role is filled by lysine 83.

The protein belongs to the transaldolase family. Type 3B subfamily.

The protein resides in the cytoplasm. It catalyses the reaction D-sedoheptulose 7-phosphate + D-glyceraldehyde 3-phosphate = D-erythrose 4-phosphate + beta-D-fructose 6-phosphate. It functions in the pathway carbohydrate degradation; pentose phosphate pathway; D-glyceraldehyde 3-phosphate and beta-D-fructose 6-phosphate from D-ribose 5-phosphate and D-xylulose 5-phosphate (non-oxidative stage): step 2/3. In terms of biological role, transaldolase is important for the balance of metabolites in the pentose-phosphate pathway. The polypeptide is Probable transaldolase (Oceanobacillus iheyensis (strain DSM 14371 / CIP 107618 / JCM 11309 / KCTC 3954 / HTE831)).